The chain runs to 158 residues: uncharacterized protein (158 aa).

Residues 1 to 26 (MRASRSPPSPRRCHHHHEATGAASGA) form a disordered region.

This is an uncharacterized protein from Homo sapiens (Human).